The chain runs to 136 residues: Histone H3.3 (136 aa).

Residues 1-45 form a disordered region; that stretch reads MARTKQTARKSTGGKAPRKQLASKAARKAAPATGGVKKPHRYRPP. Lys5 carries the post-translational modification N6,N6,N6-trimethyllysine; alternate. Lys5 carries the N6,N6-dimethyllysine; alternate modification. Lys5 and Lys10 each carry N6-methyllysine; alternate. Lys10 carries the N6-acetyllysine; alternate modification. At Ser11 the chain carries Phosphoserine. Lys15 carries the N6,N6-dimethyllysine; alternate modification. N6-acetyllysine; alternate is present on residues Lys15, Lys19, Lys24, Lys28, and Lys37. N6-methyllysine; alternate occurs at positions 19, 24, 28, and 37. Residues 19 to 32 show a composition bias toward low complexity; sequence KQLASKAARKAAPA. N6,N6,N6-trimethyllysine; alternate occurs at positions 28 and 37. An N6,N6-dimethyllysine; alternate mark is found at Lys28 and Lys37. Residues Lys57 and Lys65 each carry the N6-acetyllysine modification. Lys80 is subject to N6,N6,N6-trimethyllysine; alternate. N6,N6-dimethyllysine; alternate is present on Lys80. Residue Lys80 is modified to N6-methyllysine; alternate. Lys123 bears the N6-acetyllysine mark.

Belongs to the histone H3 family. The nucleosome is a histone octamer containing two molecules each of H2A, H2B, H3 and H4 assembled in one H3-H4 heterotetramer and two H2A-H2B heterodimers. The octamer wraps approximately 147 bp of DNA. In terms of processing, phosphorylated by ark1 to form H3S10ph in a cell cycle-dependent manner during mitosis and meiosis. H3S10ph is also formed by ssp2, promotes subsequent H3K14ac formation by gcn5, and is required for transcriptional activation through TBP recruitment to the promoters. Dephosphorylation is performed by sds21. Post-translationally, mono-, di- and trimethylated by the COMPASS complex to form H3K4me1/2/3. H3K4me activates gene expression by regulating transcription elongation and plays a role in telomere length maintenance. H3K4me enrichment correlates with transcription levels, and occurs in a 5' to 3' gradient with H3K4me3 enrichment at the 5'-end of genes, shifting to H3K4me2 and then H3K4me1. Methylated by clr4 to form H3K9me1. H3K9me1 represents a specific tag for epigenetic transcriptional repression by recruiting swi6/HP1 to methylated histones. Targeting to histone probably involves clr3 and rik1. Essential for silencing of centromeres and directional switching of the mating type. Methylated by set2 to form H3K36me. H3K36me represses gene expression. Methylated by dot1 to form H3K79me. H3K79me is required for association of SIR proteins with telomeric regions and for telomeric silencing. The COMPASS-mediated formation of H3K4me2/3 and the dot1-mediated formation of H3K79me require H2BK123ub1. Acetylation of histone H3 leads to transcriptional activation. H3K14ac formation by gcn5 is promoted by H3S10ph. H3K14ac can also be formed by esa1. H3K56ac formation occurs predominantly in newly synthesized H3 molecules during G1, S and G2/M of the cell cycle and may be involved in DNA repair. Acetylation at Lys-123 (H3K122ac) plays a central role in chromatin structure: localizes at the surface of the histone octamer and stimulates transcription, possibly by promoting nucleosome instability.

Its subcellular location is the nucleus. The protein localises to the chromosome. Its function is as follows. Core component of nucleosome. Nucleosomes wrap and compact DNA into chromatin, limiting DNA accessibility to the cellular machineries which require DNA as a template. Histones thereby play a central role in transcription regulation, DNA repair, DNA replication and chromosomal stability. DNA accessibility is regulated via a complex set of post-translational modifications of histones, also called histone code, and nucleosome remodeling. This Schizosaccharomyces pombe (strain 972 / ATCC 24843) (Fission yeast) protein is Histone H3.3 (hht3).